Consider the following 314-residue polypeptide: Putative peptide transport system permease protein BRA1092/BS1330_II1084 (314 aa).

The next 6 helical transmembrane spans lie at 12 to 32, 101 to 121, 135 to 155, 177 to 197, 237 to 257, and 286 to 306; these read AIPVMLIVAILTFLLMKLLPG, LALLAFAITIPVGIIMGVVAA, LALLGVSVPSFWLAILAVILF, WLRSLILPASILALFQIGYLA, VSVLTVSGYIFSLLIGGSVVI, and MLFLGFLFVAINVLVDILYTI. The region spanning 95 to 304 is the ABC transmembrane type-1 domain; sequence LPVTISLALL…AINVLVDILY (210 aa).

This sequence belongs to the binding-protein-dependent transport system permease family. In terms of assembly, the complex is composed of two ATP-binding proteins (BRA1094), two transmembrane proteins (BRA1092 and BRA1093) and a solute-binding protein (BRA1090).

The protein resides in the cell inner membrane. Its function is as follows. Probably part of an ABC transporter complex that could be involved in peptide import. Probably responsible for the translocation of the substrate across the membrane. The sequence is that of Putative peptide transport system permease protein BRA1092/BS1330_II1084 from Brucella suis biovar 1 (strain 1330).